The chain runs to 523 residues: MDKELAEKVKKRRTFAIISHPDAGKTTITEQMLLFGGVIRKAGTVKARKTGNFATSDWMEIEKKRGISVTSSVMQFEYKGKRINILDTPGHQDFSEDTYRTLMAVDAAVMVIDSAKGIEPQTKKLFKVVKKRGIPIFTFMNKLDRDGRPPLDLIAELEDLLGIEGVAMDWPIGSGQTLKGLYDVANNRVELYRKDGEDRFLPLNEDGTLPDSEPLSQDPQFQDTLDEIELVKEAGNKFDPEKIALGDQTPVFFGSALTNFGVETFLNSFVDLAPAPESHTVNGDEELSPEDPEFSGFVFKIQANMNPHHRDRIAFVRVGSGEFKRGLDVTLARTGKPIRLNNATEFMSSERVQVSDAVAGDIVGLYDTGNFQIGDSIYSGKRKIVYPPLPEFTPELFMRVTAKNVMKQKSFHKGMNQLVQEGAIQLYRNYQTDEYILGAVGQLQFEVFQFRMKNEYNSEVEMNSIGHRVARWIDPEQLDPRMSNSRNLLVKDRYGNPLFLFENEFAERFFHDKYPDVKLTEKL.

The tr-type G domain occupies 10 to 277; the sequence is KKRRTFAIIS…SFVDLAPAPE (268 aa). Residues 19–26, 87–91, and 141–144 contribute to the GTP site; these read SHPDAGKT, DTPGH, and NKLD.

This sequence belongs to the TRAFAC class translation factor GTPase superfamily. Classic translation factor GTPase family. PrfC subfamily.

The protein localises to the cytoplasm. Functionally, increases the formation of ribosomal termination complexes and stimulates activities of RF-1 and RF-2. It binds guanine nucleotides and has strong preference for UGA stop codons. It may interact directly with the ribosome. The stimulation of RF-1 and RF-2 is significantly reduced by GTP and GDP, but not by GMP. The chain is Peptide chain release factor 3 from Lactobacillus helveticus (strain DPC 4571).